A 229-amino-acid polypeptide reads, in one-letter code: UPF0441 protein YE3666 (229 aa).

Disordered stretches follow at residues 101-125 and 190-229; these read PAQAGMVPTSSSSSETTAAAPQQSG and KPAVTNTITRGGFGESVAKQSSMQRSAATSSKTSTRSMGG. 2 stretches are compositionally biased toward low complexity: residues 109–120 and 214–229; these read TSSSSSETTAAA and RSAATSSKTSTRSMGG.

This sequence belongs to the UPF0441 family.

The sequence is that of UPF0441 protein YE3666 from Yersinia enterocolitica serotype O:8 / biotype 1B (strain NCTC 13174 / 8081).